The primary structure comprises 709 residues: Alpha-1,2-mannosyltransferase MNN24 (709 aa).

At 1–9 (MFSIPVSSK) the chain is on the cytoplasmic side. The chain crosses the membrane as a helical span at residues 10–30 (TVRLILVSLLLITLINILAAF). Residues 31–709 (QRSTLSSWFP…KNHIEFLEIS (679 aa)) are Extracellular-facing. N-linked (GlcNAc...) asparagine glycosylation is present at N317.

The protein belongs to the MNN1/MNT family.

Its subcellular location is the golgi apparatus membrane. The protein operates within protein modification; protein glycosylation. Functionally, alpha-1,2-mannosyltransferase required for cell wall integrity. Responsible for addition of the first alpha-1,2-linked mannose to form the branches on the mannan backbone of oligosaccharides. Addition of alpha-1,2-mannose is required for stabilization of the alpha-1,6-mannose backbone and hence regulates mannan fibril length; and is important for both immune recognition and virulence. The chain is Alpha-1,2-mannosyltransferase MNN24 (MNN24) from Candida albicans (strain SC5314 / ATCC MYA-2876) (Yeast).